Here is a 174-residue protein sequence, read N- to C-terminus: Ferredoxin-2, mitochondrial (174 aa).

The transit peptide at 1–43 (MAASMARGVSARVLLRAAGGSWGPRAGHAAVTSRTFGTTGERR) directs the protein to the mitochondrion. The disordered stretch occupies residues 26–52 (AGHAAVTSRTFGTTGERRAGEEAADSP). The 103-residue stretch at 59 to 161 (VNVVFVDRSG…GVEFALPKIT (103 aa)) folds into the 2Fe-2S ferredoxin-type domain. Residues Cys-96, Cys-102, Cys-105, and Cys-142 each coordinate [2Fe-2S] cluster.

Belongs to the adrenodoxin/putidaredoxin family. In terms of assembly, component of the mitochondrial core iron-sulfur cluster (ISC) complex composed of NFS1, LYRM4, NDUFAB1, ISCU, FXN, and FDX2; this complex is a heterohexamer containing two copies of each monomer. Form a heterodimer complex with NFS1. Interacts (in both their reduced and oxidized states) with the cysteine desulfurase (NFS1:LYRM4) complex; this interaction stimulates cysteine desulfurase activity, and serves as a reductant for Fe-S cluster assembly. The cofactor is [2Fe-2S] cluster.

Its subcellular location is the mitochondrion. It localises to the mitochondrion matrix. Electron donor, of the core iron-sulfur cluster (ISC) assembly complex, that acts to reduce the persulfide into sulfide during [2Fe-2S] clusters assembly on the scaffolding protein ISCU. The core iron-sulfur cluster (ISC) assembly complex is involved in the de novo synthesis of a [2Fe-2S] cluster, the first step of the mitochondrial iron-sulfur protein biogenesis. This process is initiated by the cysteine desulfurase complex (NFS1:LYRM4:NDUFAB1) that produces persulfide which is delivered on the scaffold protein ISCU in a FXN-dependent manner. Then this complex is stabilized by FDX2 which provides reducing equivalents to accomplish the [2Fe-2S] cluster assembly. Finally, the [2Fe-2S] cluster is transferred from ISCU to chaperone proteins, including HSCB, HSPA9 and GLRX5. Essential for coenzyme Q biosynthesis: together with FDXR, transfers the electrons required for the hydroxylation reaction performed by COQ6. The sequence is that of Ferredoxin-2, mitochondrial from Mus musculus (Mouse).